An 87-amino-acid polypeptide reads, in one-letter code: Probable Fe(2+)-trafficking protein (87 aa).

It belongs to the Fe(2+)-trafficking protein family. As to quaternary structure, monomer.

Its function is as follows. Could be a mediator in iron transactions between iron acquisition and iron-requiring processes, such as synthesis and/or repair of Fe-S clusters in biosynthetic enzymes. In Buchnera aphidicola subsp. Baizongia pistaciae (strain Bp), this protein is Probable Fe(2+)-trafficking protein.